We begin with the raw amino-acid sequence, 67 residues long: Lantibiotic Flvbeta.b (67 aa).

Positions 1–34 (MDNNTKLQKLYEQLAATGSEKELDAMLDENMAGA) are cleaved as a propeptide — cleaved by FlvT. At S36 the chain carries 2,3-didehydroalanine (Ser); by FlvM2. T39 and T43 each carry 2,3-didehydrobutyrine; by FlvM2. 3 consecutive cross-links (beta-methyllanthionine (Thr-Cys); by FlvM2) follow at residues 50–56 (TTGFDWC), 58–61 (TGAC), and 62–65 (TYSC).

Post-translationally, contains DL-beta-methyllanthionine, when coepressed in E.coli with the flavecin synthetase FlvM2.

The protein localises to the secreted. Lanthionine-containing peptide antibiotic (lantibiotic) only active on Gram-positive bacteria in synergy with Flvalpha.a. Is not active in absence of Flvalpha.a, which is encoded by the same operon than Flvbeta.b. The bactericidal activity of lantibiotics is based on depolarization of energized bacterial cytoplasmic membranes, initiated by the formation of aqueous transmembrane pores. In Ruminococcus flavefaciens, this protein is Lantibiotic Flvbeta.b.